We begin with the raw amino-acid sequence, 663 residues long: DNA topoisomerase 4 subunit B (663 aa).

ATP contacts are provided by residues Tyr-7, Asn-47, Asp-74, 114–120 (GLHGVGA), and Lys-341. The tract at residues 386–418 (REAARKAREDARSGKKNKRKDTLLSGKLTPAQS) is disordered. Basic and acidic residues predominate over residues 387–398 (EAARKAREDARS). Positions 424-538 (NELYLVEGDS…AGRVFIALPP (115 aa)) constitute a Toprim domain. Residues Glu-430, Asp-503, and Asp-505 each contribute to the Mg(2+) site.

Belongs to the type II topoisomerase family. ParE type 2 subfamily. In terms of assembly, heterotetramer composed of ParC and ParE. The cofactor is Mg(2+). Requires Mn(2+) as cofactor. It depends on Ca(2+) as a cofactor.

The enzyme catalyses ATP-dependent breakage, passage and rejoining of double-stranded DNA.. Topoisomerase IV is essential for chromosome segregation. It relaxes supercoiled DNA. Performs the decatenation events required during the replication of a circular DNA molecule. The chain is DNA topoisomerase 4 subunit B from Staphylococcus aureus (strain MRSA252).